Reading from the N-terminus, the 354-residue chain is Protein-arginine kinase (354 aa).

One can recognise a Phosphagen kinase C-terminal domain in the interval 24-254 (IVLSSRIRLA…QQIIQQEKMA (231 aa)). ATP-binding positions include 27–31 (SSRIR), His92, Arg125, 176–180 (RASVM), and 207–212 (RGIYGE). The short motif at 337–342 (RDYRRA) is the RDXXRA motif of the pArg binding pocket involved in allosteric regulation element.

The protein belongs to the ATP:guanido phosphotransferase family.

The enzyme catalyses L-arginyl-[protein] + ATP = N(omega)-phospho-L-arginyl-[protein] + ADP + H(+). Its activity is regulated as follows. Appears to be allosterically activated by the binding of pArg-containing polypeptides to the pArg-binding pocket localized in the C-terminal domain of McsB. Functionally, catalyzes the specific phosphorylation of arginine residues in a large number of proteins. Is part of the bacterial stress response system. Protein arginine phosphorylation has a physiologically important role and is involved in the regulation of many critical cellular processes, such as protein homeostasis, motility, competence, and stringent and stress responses, by regulating gene expression and protein activity. The protein is Protein-arginine kinase of Bacillus cereus (strain G9842).